Consider the following 566-residue polypeptide: Sodium-dependent high-affinity dicarboxylate transporter 3 (566 aa).

12 helical membrane passes run 55-75, 92-112, 123-139, 162-182, 219-239, 268-288, 329-349, 352-372, 400-420, 439-459, 496-516, and 521-541; these read LVLV…GPEW, VMPL…VGVL, NDTN…AAAV, WIML…SNTA, MATG…TGTA, WIFF…MTLV, ILLS…GVFF, GAYT…VLPS, ETFP…AAGV, LPLW…TNIC, FAFI…SGMV, and MAFV…LYMN.

This sequence belongs to the SLC13A/DASS transporter (TC 2.A.47) family. NADC subfamily. In terms of tissue distribution, nad-1 and nad-2 are coexpressed in the intestinal tract from early larvae to adults, expression is from the pharynx through to the anus. Expression level is significantly greater in the anterior half of the intestine than in the posterior half.

It is found in the membrane. Functionally, high-affinity sodium-dicarboxylate cotransporter that accepts a range of tricarboxylic acid-cycle intermediates with 4-5 carbon atoms. There is no interaction with monocarboxylates. Plays a role in the regulation of life span. This Caenorhabditis elegans protein is Sodium-dependent high-affinity dicarboxylate transporter 3 (nac-3).